Here is a 445-residue protein sequence, read N- to C-terminus: Proton extrusion protein PxcA (445 aa).

The next 4 helical transmembrane spans lie at 227-247 (FILL…TFLI), 322-342 (AIAN…VVAF), 369-389 (LIIL…WEVI), and 405-425 (FNFL…KYWI).

This sequence belongs to the CemA family.

Its subcellular location is the cell inner membrane. Functionally, required for H(+) efflux immediately after light irradiation to form a rapid H(+) concentration gradient across the thylakoid membranes. Together with PxcL, contributes to transient H(+) uptake following dark to light transition. This is Proton extrusion protein PxcA from Microcystis aeruginosa (strain NIES-843 / IAM M-2473).